The sequence spans 255 residues: Ribosomal RNA small subunit methyltransferase A (255 aa).

N13, L15, G40, E61, D85, and N103 together coordinate S-adenosyl-L-methionine.

The protein belongs to the class I-like SAM-binding methyltransferase superfamily. rRNA adenine N(6)-methyltransferase family. RsmA subfamily.

The protein resides in the cytoplasm. It catalyses the reaction adenosine(1518)/adenosine(1519) in 16S rRNA + 4 S-adenosyl-L-methionine = N(6)-dimethyladenosine(1518)/N(6)-dimethyladenosine(1519) in 16S rRNA + 4 S-adenosyl-L-homocysteine + 4 H(+). Its function is as follows. Specifically dimethylates two adjacent adenosines (A1518 and A1519) in the loop of a conserved hairpin near the 3'-end of 16S rRNA in the 30S particle. May play a critical role in biogenesis of 30S subunits. The sequence is that of Ribosomal RNA small subunit methyltransferase A from Dechloromonas aromatica (strain RCB).